A 201-amino-acid polypeptide reads, in one-letter code: ATP-dependent Clp protease proteolytic subunit (201 aa).

The active-site Nucleophile is the serine 101. Histidine 126 is an active-site residue.

It belongs to the peptidase S14 family. Fourteen ClpP subunits assemble into 2 heptameric rings which stack back to back to give a disk-like structure with a central cavity, resembling the structure of eukaryotic proteasomes.

It localises to the cytoplasm. The enzyme catalyses Hydrolysis of proteins to small peptides in the presence of ATP and magnesium. alpha-casein is the usual test substrate. In the absence of ATP, only oligopeptides shorter than five residues are hydrolyzed (such as succinyl-Leu-Tyr-|-NHMec, and Leu-Tyr-Leu-|-Tyr-Trp, in which cleavage of the -Tyr-|-Leu- and -Tyr-|-Trp bonds also occurs).. Cleaves peptides in various proteins in a process that requires ATP hydrolysis. Has a chymotrypsin-like activity. Plays a major role in the degradation of misfolded proteins. The chain is ATP-dependent Clp protease proteolytic subunit from Francisella philomiragia subsp. philomiragia (strain ATCC 25017 / CCUG 19701 / FSC 153 / O#319-036).